Here is a 342-residue protein sequence, read N- to C-terminus: L-threonine 3-dehydrogenase (342 aa).

Cys38 contributes to the Zn(2+) binding site. Active-site charge relay system residues include Thr40 and His43. His63, Glu64, Cys93, Cys96, Cys99, and Cys107 together coordinate Zn(2+). Residues Ile175, Asp195, Arg200, 262–264 (LGI), and 286–287 (IY) each bind NAD(+).

It belongs to the zinc-containing alcohol dehydrogenase family. As to quaternary structure, homotetramer. It depends on Zn(2+) as a cofactor.

The protein resides in the cytoplasm. The enzyme catalyses L-threonine + NAD(+) = (2S)-2-amino-3-oxobutanoate + NADH + H(+). Its pathway is amino-acid degradation; L-threonine degradation via oxydo-reductase pathway; glycine from L-threonine: step 1/2. Functionally, catalyzes the NAD(+)-dependent oxidation of L-threonine to 2-amino-3-ketobutyrate. In Aeromonas salmonicida (strain A449), this protein is L-threonine 3-dehydrogenase.